A 257-amino-acid polypeptide reads, in one-letter code: BTB/POZ domain-containing protein kctd15-like (257 aa).

2 positions are modified to phosphoserine: S9 and S12. Residues 30 to 100 (APVHIDVGGH…LRTSKLLLPE (71 aa)) enclose the BTB domain.

The sequence is that of BTB/POZ domain-containing protein kctd15-like (kctd15l) from Danio rerio (Zebrafish).